Consider the following 391-residue polypeptide: MNASSRNVFDTLIRVLTESMFKHLRKWVVTRFFGHSRQRARLVSKDGRCNIEFGNVEAQSRFIFFVDIWTTVLDLKWRYKMTIFITAFLGSWFFFGLLWYAVAYIHKDLPEFHPSANHTPCVENINGLTSAFLFSLETQVTIGYGFRCVTEQCATAIFLLIFQSILGVIINSFMCGAILAKISRPKKRAKTITFSKNAVISKRGGKLCLLIRVANLRKSLLIGSHIYGKLLKTTVTPEGETIILDQININFVVDAGNENLFFISPLTIYHVIDHNSPFFHMAAETLLQQDFELVVFLDGTVESTSATCQVRTSYVPEEVLWGYRFAPIVSKTKEGKYRVDFHNFSKTVEVETPHCAMCLYNEKDVRARMKRGYDNPNFILSEVNETDDTKM.

At 1–77 the chain is on the cytoplasmic side; it reads MNASSRNVFD…IWTTVLDLKW (77 aa). Residue Ser44 is modified to Phosphoserine; by SGK1. The helical transmembrane segment at 78-102 threads the bilayer; it reads RYKMTIFITAFLGSWFFFGLLWYAV. The Extracellular portion of the chain corresponds to 103-127; it reads AYIHKDLPEFHPSANHTPCVENING. An N-linked (GlcNAc...) asparagine glycan is attached at Asn117. The helical; Pore-forming intramembrane region spans 128-139; sequence LTSAFLFSLETQ. The segment at residues 140–146 is an intramembrane region (pore-forming); sequence VTIGYGF. The Selectivity filter motif lies at 141 to 146; sequence TIGYGF. Residues 147–155 lie on the Extracellular side of the membrane; sequence RCVTEQCAT. The chain crosses the membrane as a helical span at residues 156–177; it reads AIFLLIFQSILGVIINSFMCGA. The Cytoplasmic portion of the chain corresponds to 178–391; that stretch reads ILAKISRPKK…EVNETDDTKM (214 aa). A polyphosphoinositide (PIP2)-binding region spans residues 180–207; the sequence is AKISRPKKRAKTITFSKNAVISKRGGKL. 223 to 230 provides a ligand contact to ATP; the sequence is GSHIYGKL.

It belongs to the inward rectifier-type potassium channel (TC 1.A.2.1) family. KCNJ1 subfamily. As to quaternary structure, interacts with SGK1 and SLC9A3R2/NHERF2. Phosphorylation at Ser-44 by SGK1 is necessary for its expression at the cell membrane. In terms of tissue distribution, in the kidney and pancreatic islets. Lower levels in skeletal muscle, pancreas, spleen, brain, heart and liver.

Its subcellular location is the cell membrane. It catalyses the reaction K(+)(in) = K(+)(out). With respect to regulation, inhibited by WNK3. Activated by phosphatidylinositol 4,5 biphosphate (PtdIns(4,5)P2). Its function is as follows. Inward rectifier potassium channels are characterized by a greater tendency to allow potassium to flow into the cell rather than out of it. Their voltage dependence is regulated by the concentration of extracellular potassium; as external potassium is raised, the voltage range of the channel opening shifts to more positive voltages. The inward rectification is mainly due to the blockage of outward current by internal magnesium. This channel is activated by internal ATP and can be blocked by external barium. In the kidney, probably plays a major role in potassium homeostasis. The sequence is that of ATP-sensitive inward rectifier potassium channel 1 (KCNJ1) from Homo sapiens (Human).